The primary structure comprises 713 residues: Subtilisin-like protease SBT4.9 (713 aa).

Residues 1-24 (MARRADSFCLISCVLVSFVISVSA) form the signal peptide. Residues 25-113 (VTDDSQDKQV…VFPDINYKLQ (89 aa)) constitute a propeptide, activation peptide. The Inhibitor I9 domain maps to 34–112 (VYVVYMGSLP…SVFPDINYKL (79 aa)). A Peptidase S8 domain is found at 117–560 (SWDFLGLKEG…AGHVDPIAAI (444 aa)). The active-site Charge relay system is aspartate 145. Asparagine 176 carries an N-linked (GlcNAc...) asparagine glycan. Catalysis depends on histidine 200, which acts as the Charge relay system. Asparagine 215 and asparagine 223 each carry an N-linked (GlcNAc...) asparagine glycan. Residues 356-415 (NYPLYGGSTDGPLLRGKILVSEDKVSSEIVVANINENYHDYAYVSILPSSALSKDDFDSV) enclose the PA domain. Asparagine 420 carries N-linked (GlcNAc...) asparagine glycosylation. Residue serine 499 is the Charge relay system of the active site. Asparagine 536, asparagine 583, asparagine 627, and asparagine 637 each carry an N-linked (GlcNAc...) asparagine glycan.

Belongs to the peptidase S8 family. The C-terminal propeptide is autocleaved.

The protein localises to the secreted. The chain is Subtilisin-like protease SBT4.9 from Arabidopsis thaliana (Mouse-ear cress).